We begin with the raw amino-acid sequence, 209 residues long: Abscisic acid receptor PYL3 (209 aa).

The tract at residues 1–23 (MNLAPIHDPSSSSTTTTSSSTPY) is disordered. The span at 10–21 (SSSSTTTTSSST) shows a compositional bias: low complexity. The tract at residues 43–205 (FPRSPNTCTS…NLQNLAVIST (163 aa)) is START-like. Abscisate contacts are provided by residues K79, 113–118 (ASTSVE), 140–146 (RLNNYRS), and E170. The short motif at 109-113 (SGLPA) is the Gate loop element. The Latch loop motif lies at 139-141 (HRL).

Belongs to the PYR/PYL/RCAR abscisic acid intracellular receptor family. Homodimer and monomer. Binds ABA on one subunit only. ABA-binding favors monomer and trans-homodimer intermediate, and increases PP2C inhibitor activity. Binds both (-)-ABA and (+)-ABA. Binds to CARs protein in an ABA-independent manner, both at the plasma membrane and in the nucleus. Interacts with HAB1, ABI1 and ABI2, and possibly with other PP2Cs.

The protein resides in the cytoplasm. It localises to the nucleus. Its subcellular location is the cell membrane. Functionally, receptor for abscisic acid (ABA) required for ABA-mediated responses such as stomatal closure and germination inhibition. Inhibits the activity of group-A protein phosphatases type 2C (PP2Cs) when activated by ABA. Can be activated by both (-)-ABA and (+)-ABA. The protein is Abscisic acid receptor PYL3 (PYL3) of Arabidopsis thaliana (Mouse-ear cress).